A 427-amino-acid chain; its full sequence is C4-dicarboxylate transport protein (427 aa).

The next 9 membrane-spanning stretches (helical) occupy residues 5 to 25, 44 to 64, 76 to 96, 142 to 162, 184 to 206, 222 to 242, 307 to 327, 330 to 350, and 352 to 372; these read IFSS…FLGH, LIKM…IAGM, IALL…LCVV, IGAF…LFGF, VIFG…AMAF, LIAC…GSIA, IYLT…LDLF, ITLL…TGSG, and IVLA…LALI.

Belongs to the dicarboxylate/amino acid:cation symporter (DAACS) (TC 2.A.23) family.

The protein localises to the cell inner membrane. Its function is as follows. Responsible for the transport of dicarboxylates such as succinate, fumarate, and malate from the periplasm across the membrane. This is C4-dicarboxylate transport protein from Aeromonas salmonicida (strain A449).